The sequence spans 463 residues: MNTNQIILTDQGDNYVNLWSHVAQDLYNHYGETLYNSWFSKVNFIESSLNTVILCAPTNFVRDWIKSKYSMVILQLFQHYNNTIKSIDIITKELPGTTQTVIELPTKTFADIGSSELNSENIFSTLDVRFTFDNFVVGAPNELAYAAARAVAESSGAVSESNPLFLYGGVGLGKTHLMHAIGWYIKQNNPSRKVIYMSAEKFMYQFVKALRNKEVILFKEKFRSVDVLMIDDIQFICGKDSTQEEFFHTFNTLIDNNRQMVISCDRSPSDLDNIEDRIKSRLGWGLVADVHSTTYELRLGILESKIEQMNVKIPKDVIDFLASKIVSNVRELEGALNKVIAHSNFTLKEITLENTQNILRDLLRSNERIITVEDIQKKVASRYNIKLSDMSSSRRLREVARPRQIAMYLSKALTLKSLADIGKKFGKKDHTTVMYAIKKVEELLENDIELREEINLLMKILQH.

A domain I, interacts with DnaA modulators region spans residues 1–83 (MNTNQIILTD…LQLFQHYNNT (83 aa)). Positions 83–124 (TIKSIDIITKELPGTTQTVIELPTKTFADIGSSELNSENIFS) are domain II. The interval 125–343 (TLDVRFTFDN…GALNKVIAHS (219 aa)) is domain III, AAA+ region. ATP-binding residues include G171, G173, K174, and T175. Residues 344-463 (NFTLKEITLE…INLLMKILQH (120 aa)) are domain IV, binds dsDNA.

This sequence belongs to the DnaA family. In terms of assembly, oligomerizes as a right-handed, spiral filament on DNA at oriC.

It is found in the cytoplasm. Its function is as follows. Plays an essential role in the initiation and regulation of chromosomal replication. ATP-DnaA binds to the origin of replication (oriC) to initiate formation of the DNA replication initiation complex once per cell cycle. Binds the DnaA box (a 9 base pair repeat at the origin) and separates the double-stranded (ds)DNA. Forms a right-handed helical filament on oriC DNA; dsDNA binds to the exterior of the filament while single-stranded (ss)DNA is stabiized in the filament's interior. The ATP-DnaA-oriC complex binds and stabilizes one strand of the AT-rich DNA unwinding element (DUE), permitting loading of DNA polymerase. After initiation quickly degrades to an ADP-DnaA complex that is not apt for DNA replication. Binds acidic phospholipids. The polypeptide is Chromosomal replication initiator protein DnaA (Rickettsia akari (strain Hartford)).